Here is a 323-residue protein sequence, read N- to C-terminus: MFLFEDLNVESAQAVKAEESPAQTVQSKEEQVPANSTDKVLVTHTKLLDVGAFNGVAKRKWNPKMKHYIIPRNAAQFSAQFDLINSDLLNLKLHEAFNYLTEAAKAKKNILFVGTKSKAVQELIQSIAERTNSFYINQRWLGGTLTNFKTISNSINQLKRLIHTRDNDLTKYTKKEQIMIMKKLAKLERFFGGIKDMQGLPHVLVIDDPIKEKNAVTEARKLRIPVIALCNTNSDPNVITLPIPANNYNIRSVTLLLNLLGDAVALAQGNPAKFAFKPDEEIDIPQLVKKETRTVVNRDRAGFNKKQPKAEEAAKPAEKKAEK.

Residues 295 to 323 are disordered; that stretch reads VVNRDRAGFNKKQPKAEEAAKPAEKKAEK.

It belongs to the universal ribosomal protein uS2 family.

The sequence is that of Small ribosomal subunit protein uS2 from Mycoplasmoides gallisepticum (strain R(low / passage 15 / clone 2)) (Mycoplasma gallisepticum).